A 217-amino-acid polypeptide reads, in one-letter code: MKLRYSRVNKMLVAEVFDINKNKVSEIELNDAVFGAEVNDAVIYDVVRMQMASRRFGTAATKGRSDVSGGGKKPWRQKGTGRARSGTSRSPIWRGGGIVFGPVPRDYKYNVPKKVRKNALRSVLSLKYQGQKLVVLKDFPLDEIKTKKFKEVVDRFGLKKALFVTEERNEFLEKSSRNIAGIKMVRSEGLNVYDVLNHEHLVIIEPAVKKLEGALKS.

The segment at 58-90 (TAATKGRSDVSGGGKKPWRQKGTGRARSGTSRS) is disordered.

It belongs to the universal ribosomal protein uL4 family. In terms of assembly, part of the 50S ribosomal subunit.

Its function is as follows. One of the primary rRNA binding proteins, this protein initially binds near the 5'-end of the 23S rRNA. It is important during the early stages of 50S assembly. It makes multiple contacts with different domains of the 23S rRNA in the assembled 50S subunit and ribosome. Functionally, forms part of the polypeptide exit tunnel. The protein is Large ribosomal subunit protein uL4 of Syntrophus aciditrophicus (strain SB).